The primary structure comprises 50 residues: Inducible serine protease inhibitor 1 (50 aa).

The interval 1–27 is disordered; it reads DLVXGTNFXKNNPXSTRVAANSXRSPS. A compositionally biased stretch (polar residues) spans 8–25; it reads FXKNNPXSTRVAANSXRS.

Inhibits trypsin and the toxin protease PR2 of M.anisopliae. Does not inhibit chymotrypsin, subtilisin Carlsberg, proteinase K, porcine pancreatic elastase and the toxin protease PR1 of M.anisopliae. The protein is Inducible serine protease inhibitor 1 of Galleria mellonella (Greater wax moth).